Reading from the N-terminus, the 478-residue chain is DNA-directed RNA polymerase II subunit RPB1 (478 aa).

The Zn(2+) site is built by C68, C71, C78, H81, C108, C111, and C149. Residues D474 and D476 each contribute to the Mg(2+) site.

The protein belongs to the RNA polymerase beta' chain family. Component of the RNA polymerase II (Pol II) complex consisting of 12 subunits. In terms of processing, phosphorylation activates POL II.

The protein localises to the nucleus. The enzyme catalyses RNA(n) + a ribonucleoside 5'-triphosphate = RNA(n+1) + diphosphate. Functionally, DNA-dependent RNA polymerase catalyzes the transcription of DNA into RNA using the four ribonucleoside triphosphates as substrates. Largest and catalytic component of RNA polymerase II which synthesizes mRNA precursors and many functional non-coding RNAs. Forms the polymerase active center together with the second largest subunit. Pol II is the central component of the basal RNA polymerase II transcription machinery. It is composed of mobile elements that move relative to each other. RPB1 is part of the core element with the central large cleft, the clamp element that moves to open and close the cleft and the jaws that are thought to grab the incoming DNA template. At the start of transcription, a single-stranded DNA template strand of the promoter is positioned within the central active site cleft of Pol II. A bridging helix emanates from RPB1 and crosses the cleft near the catalytic site and is thought to promote translocation of Pol II by acting as a ratchet that moves the RNA-DNA hybrid through the active site by switching from straight to bent conformations at each step of nucleotide addition. During transcription elongation, Pol II moves on the template as the transcript elongates. Elongation is influenced by the phosphorylation status of the C-terminal domain (CTD) of Pol II largest subunit (RPB1), which serves as a platform for assembly of factors that regulate transcription initiation, elongation, termination and mRNA processing. The chain is DNA-directed RNA polymerase II subunit RPB1 (RPB1) from Euplotoides octocarinatus (Freshwater ciliate).